An 843-amino-acid chain; its full sequence is Urease (843 aa).

The 444-residue stretch at 400 to 843 (GGIDCHVHFI…VPLSRNYFLF (444 aa)) folds into the Urease domain. His-405, His-407, and Lys-488 together coordinate Ni(2+). Lys-488 is modified (N6-carboxylysine). His-490 lines the substrate pocket. His-517 and His-543 together coordinate Ni(2+). His-591 acts as the Proton donor in catalysis. Asp-631 lines the Ni(2+) pocket.

It in the C-terminal section; belongs to the metallo-dependent hydrolases superfamily. Urease alpha subunit family. Homohexamer. Other oligomeric forms may exist depending on pH and presence of salts. Ni(2+) is required as a cofactor. In terms of processing, carboxylation allows a single lysine to coordinate two nickel ions.

It catalyses the reaction urea + 2 H2O + H(+) = hydrogencarbonate + 2 NH4(+). The protein operates within nitrogen metabolism; urea degradation; CO(2) and NH(3) from urea (urease route): step 1/1. Urea hydrolase involved in nitrogen recycling from ureide, purine, and arginine catabolism. This Oryza sativa subsp. indica (Rice) protein is Urease.